A 120-amino-acid polypeptide reads, in one-letter code: Glycophorin-A (120 aa).

Gln1 carries the post-translational modification Pyrrolidone carboxylic acid. Residues 1-40 are disordered; the sequence is QTIATGSPPIAGTSDLSTITSAATPTFTTEQDGREQGDGL. O-linked (GalNAc...) threonine glycosylation is found at Thr2 and Thr5. Ser7 carries an O-linked (GalNAc...) serine glycan. Thr13 is a glycosylation site (O-linked (GalNAc...) threonine). Residue Ser17 is glycosylated (O-linked (GalNAc...) serine). Low complexity predominate over residues 17–29; that stretch reads STITSAATPTFTT. Thr18 and Thr20 each carry an O-linked (GalNAc...) threonine glycan. An O-linked (GalNAc...) serine glycan is attached at Ser21. O-linked (GalNAc...) threonine glycans are attached at residues Thr24 and Thr28. Residues 50-72 traverse the membrane as a helical segment; it reads VITVIILGVMAGIIGIILLLAYV. A disordered region spans residues 78-120; it reads KRPPADVPPPASTVPSADAPPPVSEDDETSLTSVETDYPGDSQ. Over residues 82–100 the composition is skewed to pro residues; that stretch reads ADVPPPASTVPSADAPPPV. A compositionally biased stretch (polar residues) spans 107–120; sequence SLTSVETDYPGDSQ. Ser119 carries the phosphoserine modification.

The protein belongs to the glycophorin-A family. As to quaternary structure, homodimer.

It localises to the membrane. Glycophorin A is the major intrinsic membrane sialoglycoprotein of the erythrocyte. Appears to be important for the function of SLC4A1 and is required for high activity of SLC4A1. May be involved in translocation of SLC4A1 to the plasma membrane. This Equus caballus (Horse) protein is Glycophorin-A.